The chain runs to 323 residues: Fructose-1,6-bisphosphatase class 1 (323 aa).

Residues Glu84, Asp103, Leu105, and Asp106 each contribute to the Mg(2+) site. Residues 106-109, Asn198, and Lys264 each bind substrate; that span reads DGSS. A Mg(2+)-binding site is contributed by Glu270.

This sequence belongs to the FBPase class 1 family. In terms of assembly, homotetramer. The cofactor is Mg(2+).

It localises to the cytoplasm. It carries out the reaction beta-D-fructose 1,6-bisphosphate + H2O = beta-D-fructose 6-phosphate + phosphate. Its pathway is carbohydrate biosynthesis; gluconeogenesis. The protein is Fructose-1,6-bisphosphatase class 1 of Cellvibrio japonicus (strain Ueda107) (Pseudomonas fluorescens subsp. cellulosa).